A 1026-amino-acid chain; its full sequence is Multidrug resistance protein MdtC (1026 aa).

11 helical membrane passes run 15–35 (ILIA…LPVA), 333–353 (EVEE…FLFL), 360–380 (LIPA…MYLC), 387–407 (LSLM…IVVL), 431–451 (VGFT…PLLL), 463–483 (FAVT…TLTP), 528–548 (LVGV…IAIP), 853–873 (LILI…LYES), 897–917 (LFNA…IGIV), 953–973 (PIMM…LSGG), and 984–1004 (ITIV…TPVV).

It belongs to the resistance-nodulation-cell division (RND) (TC 2.A.6) family. MdtC subfamily. In terms of assembly, part of a tripartite efflux system composed of MdtA, MdtB and MdtC. MdtC forms a heteromultimer with MdtB.

The protein localises to the cell inner membrane. In Salmonella enteritidis PT4 (strain P125109), this protein is Multidrug resistance protein MdtC.